The primary structure comprises 271 residues: MSPERRIEGLALKVGPLGEHDRLLTLLSDDVGLIRLAVPGARKPRSSLAAAVPLTTMELQVGGRSGLLRVRQLRVQHNFGNVGQRLETLAAAQALSELSISLVAGDDPVPGMLSAVLMHLERLELLAQKQRSSEMKSAEGERVDRTLATLVQACVHLLALGGYGLPLQTCCRSGAALSPPIGNWEWRCSLLADEGLAIGSQAGAAIQINPSELALLQRLTRLELPERQDGGLMGPRPVWLRLFTLLESWCRVHLPRPVRSFAMVREAVANA.

Belongs to the RecO family.

Its function is as follows. Involved in DNA repair and RecF pathway recombination. The protein is DNA repair protein RecO of Synechococcus sp. (strain CC9311).